A 108-amino-acid polypeptide reads, in one-letter code: MILQRLFRFSSIIRSAVSVHFRRNIGVTAVAFNKELDPVQKLFVDKIREYKSKRQTSGGPVDTGPEYQQELEKELFKLKQMFGKADMNTFPTFKFEDPKFEVIEKPPA.

The transit peptide at 1-32 directs the protein to the mitochondrion; sequence MILQRLFRFSSIIRSAVSVHFRRNIGVTAVAF. N6-acetyllysine occurs at positions 41, 46, and 79. N6-acetyllysine; alternate occurs at positions 84, 94, and 99. Lys-84, Lys-94, and Lys-99 each carry N6-succinyllysine; alternate. Lys-105 is subject to N6-acetyllysine.

The protein belongs to the eukaryotic ATPase subunit F6 family. In terms of assembly, component of the ATP synthase complex composed at least of ATP5F1A/subunit alpha, ATP5F1B/subunit beta, ATP5MC1/subunit c (homooctomer), MT-ATP6/subunit a, MT-ATP8/subunit 8, ATP5ME/subunit e, ATP5MF/subunit f, ATP5MG/subunit g, ATP5MK/subunit k, ATP5MJ/subunit j, ATP5F1C/subunit gamma, ATP5F1D/subunit delta, ATP5F1E/subunit epsilon, ATP5PF/subunit F6, ATP5PB/subunit b, ATP5PD/subunit d, ATP5PO/subunit OSCP. ATP synthase complex consists of a soluble F(1) head domain (subunits alpha(3) and beta(3)) - the catalytic core - and a membrane F(0) domain - the membrane proton channel (subunits c, a, 8, e, f, g, k and j). These two domains are linked by a central stalk (subunits gamma, delta, and epsilon) rotating inside the F1 region and a stationary peripheral stalk (subunits F6, b, d, and OSCP).

The protein resides in the mitochondrion. It localises to the mitochondrion inner membrane. Subunit F6, of the mitochondrial membrane ATP synthase complex (F(1)F(0) ATP synthase or Complex V) that produces ATP from ADP in the presence of a proton gradient across the membrane which is generated by electron transport complexes of the respiratory chain. ATP synthase complex consist of a soluble F(1) head domain - the catalytic core - and a membrane F(1) domain - the membrane proton channel. These two domains are linked by a central stalk rotating inside the F(1) region and a stationary peripheral stalk. During catalysis, ATP synthesis in the catalytic domain of F(1) is coupled via a rotary mechanism of the central stalk subunits to proton translocation. In vivo, can only synthesize ATP although its ATP hydrolase activity can be activated artificially in vitro. Part of the complex F(0) domain. Part of the complex F(0) domain and the peripheric stalk, which acts as a stator to hold the catalytic alpha(3)beta(3) subcomplex and subunit a/ATP6 static relative to the rotary elements. This is ATP synthase peripheral stalk subunit F6, mitochondrial from Macaca fascicularis (Crab-eating macaque).